We begin with the raw amino-acid sequence, 315 residues long: MGSRALPPGPVQTLIFLDLEATGLPFSQPKITELCLLAVHRYALEGLSAPQGPSPTAPVPPRVLDKLSLCVAPGKVCSPAASEITGLSTAVLAAHGRRAFDADLVNLIRTFLQRQPQPWCLVAHNGDRYDFPLLRAELALLGLASALDDAFCVDSIAALKALEPTGSSSEHGPRKSYSLGSVYTRLYGQAPPDSHTAEGDVLALLSVCQWRPRALLRWVDAHAKPFSTVKPMYVITTSTGTNPRPSAVTATVPLARASDTGPNLRGDRSPKPAPSPKMCPGAPPGEGLLAPLGLLAFLTLAVAMLYGLSLAMPGQ.

Mg(2+)-binding residues include aspartate 18 and glutamate 20. Residue glutamate 20–alanine 21 participates in substrate binding. Serine 78 carries the post-translational modification Phosphoserine. Residue tyrosine 129 coordinates substrate. The residue at position 167 (serine 167) is a Phosphoserine. Histidine 195 (proton donor/acceptor) is an active-site residue. Aspartate 200 is a binding site for Mg(2+). Substrate is bound at residue aspartate 200. The tract at residues threonine 236–glutamine 315 is necessary for endoplasmic reticulum localization. Residues proline 243–glutamine 315 are interaction with UBQLN1. Residues arginine 256–alanine 282 form a disordered region. Residues lysine 271–alanine 282 are compositionally biased toward pro residues. Positions alanine 282–glutamine 315 are necessary for cytoplasmic retention.

The protein belongs to the exonuclease superfamily. TREX family. As to quaternary structure, homodimer. Interacts (via proline-rich region) with TCERG1/CA150 (via the second WW domain). Component of the SET complex, composed of at least ANP32A, APEX1, HMGB2, NME1, SET and TREX1. Within this complex, directly interacts with SET; this interaction does not result in TREX1 inhibition. Also interacts with NME1, but only following translocation to the nucleus. Directly interacts with UBQLN1 (via ubiquitin-like domain); the interaction may control TREX1 subcellular location. Requires Mg(2+) as cofactor. Ubiquitinated, but not targeted to proteasomal degradation. Ubiquitination may be important for interaction with UBQLN1.

The protein resides in the nucleus. Its subcellular location is the cytoplasm. It localises to the cytosol. It is found in the endoplasmic reticulum membrane. It catalyses the reaction Exonucleolytic cleavage in the 3'- to 5'-direction to yield nucleoside 5'-phosphates.. Functionally, major cellular 3'-to-5' DNA exonuclease which digests single-stranded DNA (ssDNA) and double-stranded DNA (dsDNA) with mismatched 3' termini. Prevents cell-intrinsic initiation of autoimmunity. Acts by metabolizing DNA fragments from endogenous retroelements, including L1, LTR and SINE elements. Plays a key role in degradation of DNA fragments at cytosolic micronuclei arising from genome instability: its association with the endoplasmic reticulum membrane directs TREX1 to ruptured micronuclei, leading to micronuclear DNA degradation. Micronuclear DNA degradation is required to limit CGAS activation and subsequent inflammation. Unless degraded, these DNA fragments accumulate in the cytosol and activate the cGAS-STING innate immune signaling, leading to the production of type I interferon. Prevents chronic ATM-dependent checkpoint activation, by processing ssDNA polynucleotide species arising from the processing of aberrant DNA replication intermediates. Inefficiently degrades oxidized DNA, such as that generated upon antimicrobial reactive oxygen production or upon absorption of UV light. During GZMA-mediated cell death, contributes to DNA damage in concert with NME1. NME1 nicks one strand of DNA and TREX1 removes bases from the free 3' end to enhance DNA damage and prevent DNA end reannealing and rapid repair. The protein is Three-prime repair exonuclease 1 of Bos taurus (Bovine).